The sequence spans 225 residues: Probable polyketide biosynthesis zinc-dependent hydrolase PksB (225 aa).

Positions 62, 64, 66, 67, 123, 140, and 181 each coordinate Zn(2+).

This sequence belongs to the metallo-beta-lactamase superfamily. Zn(2+) serves as cofactor.

It localises to the cytoplasm. The protein operates within antibiotic biosynthesis; bacillaene biosynthesis. In terms of biological role, probably involved in some intermediate steps for the synthesis of the antibiotic polyketide bacillaene which is involved in secondary metabolism. The protein is Probable polyketide biosynthesis zinc-dependent hydrolase PksB (pksB) of Bacillus subtilis (strain 168).